The chain runs to 132 residues: Myelin P2 protein (132 aa).

Residue serine 2 is modified to N-acetylserine. Position 107 (arginine 107) interacts with (9Z)-octadecenoate. Residue arginine 107 participates in hexadecanoate binding. Cysteine 118 and cysteine 125 are disulfide-bonded. (9Z)-octadecenoate is bound at residue 127–129 (RIY). Residue 127–129 (RIY) coordinates hexadecanoate.

Belongs to the calycin superfamily. Fatty-acid binding protein (FABP) family. Monomer. Detected in spinal cord (at protein level).

The protein resides in the cytoplasm. Functionally, may play a role in lipid transport protein in Schwann cells. May bind cholesterol. This Equus caballus (Horse) protein is Myelin P2 protein (PMP2).